The primary structure comprises 151 residues: Major latex allergen Hev b 5 (151 aa).

The interval 1–151 (MASVEVESAA…TEVPVEKTEE (151 aa)) is disordered. Ala2 is subject to N-acetylalanine. Residues 17-31 (ETPEVTKAEETKTEE) show a composition bias toward basic and acidic residues. Low complexity-rich tracts occupy residues 36 to 45 (PASEQETADA) and 53 to 64 (TAAPAEPEAPAP). Basic and acidic residues-rich tracts occupy residues 65 to 80 (ETEK…KTEE), 103 to 113 (EEPKHETKETE), and 122 to 133 (EGEKPAEEEKPI). Low complexity predominate over residues 134–144 (TEAAETATTEV).

The protein to kiwi fruit protein PKIWI501. Post-translationally, the N-terminus is blocked.

In Hevea brasiliensis (Para rubber tree), this protein is Major latex allergen Hev b 5.